The sequence spans 119 residues: MNTEKLETLLGFYKQYKALSEYIDKKYKLSLNDLAVLDLTMKHCKDEKVLMQSFLKTAMDELDLSRTKLLVSIRRLIEKERLSKVRSSKDERKIYIYLNNDDISKFNALFEDVEQFLNI.

Residues 55–78 (LKTAMDELDLSRTKLLVSIRRLIE) constitute a DNA-binding region (H-T-H motif).

This sequence belongs to the SarA family.

The protein resides in the cytoplasm. In terms of biological role, involved in the regulation of virulence genes. Acts as a repressor of the agr locus and consequently targets genes regulated by the agr system such as sspA, hla and hlb. Binds directly to the agr promoter region. The sequence is that of HTH-type transcriptional regulator SarX (sarX) from Staphylococcus aureus (strain USA300).